Consider the following 945-residue polypeptide: MQAAPCARRLARRSHSALLAALTVLLLQTLVVWNFSSLDSGAGERRGGAAVGGGEQPPPAPRRERRDLPAEPAAARGGGGGGGGCGGGGRGPQARARGGGPGEPRGQQPASRGALPARALDGYFSHRPKEKVRTDSNNENSVPKDFENVDNSNFAPRTQKQKHQPELAKKPPSRQKELLKRKLEQQEKGKGHTFPGKGPGEVLPPGDRAAANSSHGKDVSRPPHARKTGGSSPETKYDQPPKCDISGKEAISALSRAKSKHCRQEIGETYCRHKLGLLMPEKVTRFCPLEGKANKNVQWDEDSVEYMPANPVRIAFVLVVHGRASRQLQRMFKAIYHKDHFYYIHVDKRSNYLHRQVLQVSRQYSNVRVTPWRMATIWGGASLLSTYLQSMRDLLEMTDWPWDFFINLSAADYPIRTNDQLVAFLSRYRDMNFLKSHGRDNARFIRKQGLDRLFLECDAHMWRLGDRRIPEGIAVDGGSDWFLLNRRFVEYVTFSTDDLVTKMKQFYSYTLLPAESFFHTVLENSPHCDTMVDNNLRITNWNRKLGCKCQYKHIVDWCGCSPNDFKPQDFHRFQQTARPTFFARKFEAVVNQEIIGQLDYYLYGNYPAGTPGLRSYWENVYDEPDGIHSLSDVTLTLYHSFARLGLRRAETSLHTDGENSCRYYPMGHPASVHLYFLADRFQGFLIKHHATNLAVSKLETLETWVMPKKVFKIASPPSDFGRLQFSEVGTDWDAKERLFRNFGGLLGPMDEPVGMQKWGKGPNVTVTVIWVDPVNVIAATYDILIESTAEFTHYKPPLNLPLRPGVWTVKILHHWVPVAETKFLVAPLTFSNRQPIKPEEALKLHNGPLRNAYMEQSFQSLNPVLSLPISPAQVEQARRNAASTGTALEGWLDSLVGGMWTAMDICATGPTACPVMQTCSQTAWSSFSPDPKSELGAVKPDGRLR.

The Cytoplasmic segment spans residues 1 to 17 (MQAAPCARRLARRSHSA). The helical; Signal-anchor for type II membrane protein transmembrane segment at 18 to 38 (LLAALTVLLLQTLVVWNFSSL) threads the bilayer. At 39-945 (DSGAGERRGG…GAVKPDGRLR (907 aa)) the chain is on the lumenal side. Residues 42-245 (AGERRGGAAV…KYDQPPKCDI (204 aa)) are disordered. A compositionally biased stretch (gly residues) spans 76 to 103 (RGGGGGGGGCGGGGRGPQARARGGGPGE). A compositionally biased stretch (basic and acidic residues) spans 131 to 147 (KVRTDSNNENSVPKDFE). The span at 149 to 158 (VDNSNFAPRT) shows a compositional bias: polar residues. Residues 163–190 (HQPELAKKPPSRQKELLKRKLEQQEKGK) are compositionally biased toward basic and acidic residues. Residue asparagine 212 is glycosylated (N-linked (GlcNAc...) asparagine). Residues 235 to 245 (TKYDQPPKCDI) show a composition bias toward basic and acidic residues. 4 cysteine pairs are disulfide-bonded: cysteine 243-cysteine 271, cysteine 287-cysteine 528, cysteine 547-cysteine 560, and cysteine 549-cysteine 558. UDP-alpha-D-xylose-binding positions include valine 319, aspartate 347, and 376 to 378 (TIW). Residue asparagine 407 is glycosylated (N-linked (GlcNAc...) asparagine). Position 480-481 (480-481 (DW)) interacts with UDP-alpha-D-xylose. UDP-alpha-D-xylose is bound by residues serine 561 and 584 to 585 (RK). Disulfide bonds link cysteine 661/cysteine 913 and cysteine 906/cysteine 919. N-linked (GlcNAc...) asparagine glycosylation occurs at asparagine 763. Residues 926 to 945 (SFSPDPKSELGAVKPDGRLR) form a disordered region.

This sequence belongs to the glycosyltransferase 14 family. XylT subfamily. In terms of assembly, monomer. A divalent metal cation is required as a cofactor. In terms of processing, contains 7 disulfide bonds. Post-translationally, N-glycosylated.

The protein resides in the golgi apparatus membrane. The enzyme catalyses UDP-alpha-D-xylose + L-seryl-[protein] = 3-O-(beta-D-xylosyl)-L-seryl-[protein] + UDP + H(+). Its pathway is glycan metabolism; chondroitin sulfate biosynthesis. It functions in the pathway glycan metabolism; heparan sulfate biosynthesis. Catalyzes the first step in the biosynthesis of chondroitin sulfate and dermatan sulfate proteoglycans, such as DCN. Transfers D-xylose from UDP-D-xylose to specific serine residues of the core protein. Required for normal maturation of chondrocytes during bone development, normal onset of ossification and normal embryonic and postnatal skeleton development, especially of the long bones. This Pan troglodytes (Chimpanzee) protein is Xylosyltransferase 1 (XYLT1).